The following is a 548-amino-acid chain: Polynucleotide 5'-hydroxyl-kinase nol-9 (548 aa).

ATP is bound at residue 186–193 (GHKGAGKS).

This sequence belongs to the Clp1 family. NOL9/GRC3 subfamily.

The protein localises to the nucleus. It is found in the nucleolus. In terms of biological role, polynucleotide 5'-kinase involved in rRNA processing. This is Polynucleotide 5'-hydroxyl-kinase nol-9 (nol-9) from Caenorhabditis briggsae.